A 238-amino-acid chain; its full sequence is Ribonuclease PH (238 aa).

Phosphate contacts are provided by residues Arg-86 and 124–126 (GTR).

It belongs to the RNase PH family. In terms of assembly, homohexameric ring arranged as a trimer of dimers.

The enzyme catalyses tRNA(n+1) + phosphate = tRNA(n) + a ribonucleoside 5'-diphosphate. Functionally, phosphorolytic 3'-5' exoribonuclease that plays an important role in tRNA 3'-end maturation. Removes nucleotide residues following the 3'-CCA terminus of tRNAs; can also add nucleotides to the ends of RNA molecules by using nucleoside diphosphates as substrates, but this may not be physiologically important. Probably plays a role in initiation of 16S rRNA degradation (leading to ribosome degradation) during starvation. This chain is Ribonuclease PH, found in Haemophilus ducreyi (strain 35000HP / ATCC 700724).